A 77-amino-acid chain; its full sequence is uncharacterized protein (77 aa).

This is an uncharacterized protein from Orgyia pseudotsugata multicapsid polyhedrosis virus (OpMNPV).